Reading from the N-terminus, the 816-residue chain is MAEPLKEEDGEDGSAEPPGPVKAEPAHTAASVAAKNLALLKARSFDVTFDVGDEYEIIETIGNGAYGVVSSARRRLTGQQVAIKKIPNAFDVVTNAKRTLRELKILKHFKHDNIIAIKDILRPTVPYGEFKSVYVVLDLMESDLHQIIHSSQPLTLEHVRYFLYQLLRGLKYMHSAQVIHRDLKPSNLLVNENCELKIGDFGMARGLCTSPAEHQYFMTEYVATRWYRAPELMLSLHEYTQAIDLWSVGCIFGEMLARRQLFPGKNYVHQLQLIMMVLGTPSPAVIQAVGAERVRAYIQSLPPRQPVPWETVYPGADRQALSLLGRMLRFEPSARISAAAALRHPFLAKYHDPDDEPDCAPPFDFAFDREALTRERIKEAIVAEIEDFHARREGIRQQIRFQPSLQPVASEPGCPDVEMPSPWAPSGDCAMESPPPAPPPCPGPAPDTIDLTLQPPPPVSEPAPPKKDGAISDNTKAALKAALLKSLRSRLRDGPSAPLEAPEPRKPVTAQERQREREEKRRRRQERAKEREKRRQERERKERGAGASGGPSTDPLAGLVLSDNDRSLLERWTRMARPAAPALTSVPAPAPAPTPTPTPVQPTSPPPGPVAQPTGPQPQSAGSTSGPVPQPACPPPGPAPHPTGPPGPIPVPAPPQIATSTSLLAAQSLVPPPGLPGSSTPGVLPYFPPGLPPPDAGGAPQSSMSESPDVNLVTQQLSKSQVEDPLPPVFSGTPKGSGAGYGVGFDLEEFLNQSFDMGVADGPQDGQADSASLSASLLADWLEGHGMNPADIESLQREIQMDSPMLLADLPDLQDP.

Residues 1–26 (MAEPLKEEDGEDGSAEPPGPVKAEPA) form a disordered region. A2 is modified (N-acetylalanine). Residues 2-77 (AEPLKEEDGE…VVSSARRRLT (76 aa)) form a required for cytoplasmic targeting region. The Protein kinase domain maps to 55–347 (YEIIETIGNG…AAAALRHPFL (293 aa)). ATP is bound by residues 61–69 (IGNGAYGVV) and K84. A required for binding to MAP2K5 region spans residues 78–139 (GQQVAIKKIP…FKSVYVVLDL (62 aa)). Residues 140-406 (MESDLHQIIH…QQIRFQPSLQ (267 aa)) form a necessary for oligomerization region. D182 (proton acceptor) is an active-site residue. A TXY motif is present at residues 219-221 (TEY). The interval 406 to 737 (QPVASEPGCP…PVFSGTPKGS (332 aa)) is disordered. The interval 407 to 806 (PVASEPGCPD…REIQMDSPML (400 aa)) is may not be required for kinase activity; required to stimulate MEF2C activity. 2 stretches are compositionally biased toward pro residues: residues 433-445 (SPPP…PGPA) and 454-463 (QPPPPVSEPA). Positions 476–486 (KAALKAALLKS) are enriched in low complexity. Basic and acidic residues-rich tracts occupy residues 502-519 (PEPR…EREE), 527-544 (RAKE…KERG), and 563-573 (DNDRSLLERWT). The short motif at 505–539 (RKPVTAQERQREREEKRRRRQERAKEREKRRQERE) is the Nuclear localization signal element. Over residues 578-587 (PAAPALTSVP) the composition is skewed to low complexity. Pro residues-rich tracts occupy residues 588–610 (APAP…PGPV) and 628–655 (VPQP…PAPP). Over residues 676 to 685 (PGSSTPGVLP) the composition is skewed to low complexity. Over residues 686–695 (YFPPGLPPPD) the composition is skewed to pro residues. Residues 701-720 (QSSMSESPDVNLVTQQLSKS) show a composition bias toward polar residues. S720 is subject to Phosphoserine. Position 733 is a phosphothreonine (T733).

Belongs to the protein kinase superfamily. CMGC Ser/Thr protein kinase family. MAP kinase subfamily. Interacts with MAP2K5. Forms oligomers. Interacts with MEF2A, MEF2C and MEF2D; the interaction phosphorylates the MEF2s and enhances transcriptional activity of MEF2A, MEF2C but not MEF2D. Interacts with SGK1. Preferentially interacts with PML isoform PML-4 but shows interaction also with its other isoforms: isoform PML-1, isoform PML-2, isoform PML-3 and isoform PML-6. Interacts (via N-terminal half) with HSP90AB1-CDC37 chaperone complex in resting cells; the interaction is MAP2K5-independent and prevents MAPK7 from ubiquitination and proteasomal degradation. Interacts with STUB1/CHIP; the interaction is enhanced in the presence of IGF1 or MAP2K5 and promotes STUB1/CHIP E3 ligase activity. Mg(2+) serves as cofactor. Post-translationally, dually phosphorylated on Thr-219 and Tyr-221, which activates the enzyme. Autophosphorylated in vitro on threonine and tyrosine residues when the C-terminal part of the kinase, which could have a regulatory role, is absent. In terms of tissue distribution, expressed in many adult tissues. Abundant in heart, placenta, lung, kidney and skeletal muscle. Not detectable in liver.

Its subcellular location is the cytoplasm. The protein localises to the nucleus. It is found in the PML body. The catalysed reaction is L-seryl-[protein] + ATP = O-phospho-L-seryl-[protein] + ADP + H(+). The enzyme catalyses L-threonyl-[protein] + ATP = O-phospho-L-threonyl-[protein] + ADP + H(+). Activated by tyrosine and threonine phosphorylation. Activated in response to hyperosmolarity, hydrogen peroxide, and epidermal growth factor (EGF). Functionally, plays a role in various cellular processes such as proliferation, differentiation and cell survival. The upstream activator of MAPK7 is the MAPK kinase MAP2K5. Upon activation, it translocates to the nucleus and phosphorylates various downstream targets including MEF2C. EGF activates MAPK7 through a Ras-independent and MAP2K5-dependent pathway. As part of the MAPK/ERK signaling pathway, acts as a negative regulator of apoptosis in cardiomyocytes via interaction with STUB1/CHIP and promotion of STUB1-mediated ubiquitination and degradation of ICER-type isoforms of CREM. May have a role in muscle cell differentiation. May be important for endothelial function and maintenance of blood vessel integrity. MAP2K5 and MAPK7 interact specifically with one another and not with MEK1/ERK1 or MEK2/ERK2 pathways. Phosphorylates SGK1 at Ser-78 and this is required for growth factor-induced cell cycle progression. Involved in the regulation of p53/TP53 by disrupting the PML-MDM2 interaction. The polypeptide is Mitogen-activated protein kinase 7 (MAPK7) (Homo sapiens (Human)).